Reading from the N-terminus, the 64-residue chain is Disintegrin VB7B (64 aa).

The Disintegrin domain maps to 1 to 64 (ELLQNSGNPC…TGISSDCPRN (64 aa)). Intrachain disulfides connect cysteine 10-cysteine 33, cysteine 24-cysteine 30, cysteine 29-cysteine 54, and cysteine 42-cysteine 61. Residues 46-48 (KGD) carry the Cell attachment site; atypical (KGD) motif.

This sequence belongs to the venom metalloproteinase (M12B) family. P-II subfamily. P-IIe sub-subfamily. Heterodimer with VB7A; disulfide-linked. Expressed by the venom gland.

It localises to the secreted. Its function is as follows. Poor inhibitor of platelet aggregation. The disintegrin inhibits the adhesion of cells expressing the RGD-dependent integrin alpha-5/beta-1 (ITGA5/ITGB1) to immobilized fibronectin. Inhibition on alpha-IIb/beta-3 (ITGA2B/ITGB3) is low. This Vipera berus berus (Common viper) protein is Disintegrin VB7B.